The following is a 113-amino-acid chain: Putative pterin-4-alpha-carbinolamine dehydratase (113 aa).

This sequence belongs to the pterin-4-alpha-carbinolamine dehydratase family.

It carries out the reaction (4aS,6R)-4a-hydroxy-L-erythro-5,6,7,8-tetrahydrobiopterin = (6R)-L-erythro-6,7-dihydrobiopterin + H2O. This chain is Putative pterin-4-alpha-carbinolamine dehydratase, found in Nitrosomonas eutropha (strain DSM 101675 / C91 / Nm57).